A 330-amino-acid chain; its full sequence is N-acetyl-gamma-glutamyl-phosphate reductase (330 aa).

Cys-155 is an active-site residue.

The protein belongs to the NAGSA dehydrogenase family. Type 1 subfamily.

The protein resides in the cytoplasm. The enzyme catalyses N-acetyl-L-glutamate 5-semialdehyde + phosphate + NADP(+) = N-acetyl-L-glutamyl 5-phosphate + NADPH + H(+). It functions in the pathway amino-acid biosynthesis; L-arginine biosynthesis; N(2)-acetyl-L-ornithine from L-glutamate: step 3/4. Its function is as follows. Catalyzes the NADPH-dependent reduction of N-acetyl-5-glutamyl phosphate to yield N-acetyl-L-glutamate 5-semialdehyde. This is N-acetyl-gamma-glutamyl-phosphate reductase from Shewanella halifaxensis (strain HAW-EB4).